Here is a 177-residue protein sequence, read N- to C-terminus: ATP synthase subunit delta (177 aa).

Belongs to the ATPase delta chain family. As to quaternary structure, F-type ATPases have 2 components, F(1) - the catalytic core - and F(0) - the membrane proton channel. F(1) has five subunits: alpha(3), beta(3), gamma(1), delta(1), epsilon(1). F(0) has three main subunits: a(1), b(2) and c(10-14). The alpha and beta chains form an alternating ring which encloses part of the gamma chain. F(1) is attached to F(0) by a central stalk formed by the gamma and epsilon chains, while a peripheral stalk is formed by the delta and b chains.

It is found in the cell inner membrane. Functionally, f(1)F(0) ATP synthase produces ATP from ADP in the presence of a proton or sodium gradient. F-type ATPases consist of two structural domains, F(1) containing the extramembraneous catalytic core and F(0) containing the membrane proton channel, linked together by a central stalk and a peripheral stalk. During catalysis, ATP synthesis in the catalytic domain of F(1) is coupled via a rotary mechanism of the central stalk subunits to proton translocation. This protein is part of the stalk that links CF(0) to CF(1). It either transmits conformational changes from CF(0) to CF(1) or is implicated in proton conduction. The sequence is that of ATP synthase subunit delta from Shewanella pealeana (strain ATCC 700345 / ANG-SQ1).